The primary structure comprises 310 residues: Ribosomal protein uL3 glutamine methyltransferase (310 aa).

Belongs to the protein N5-glutamine methyltransferase family. PrmB subfamily.

It catalyses the reaction L-glutaminyl-[ribosomal protein uL3] + S-adenosyl-L-methionine = N(5)-methyl-L-glutaminyl-[ribosomal protein uL3] + S-adenosyl-L-homocysteine + H(+). Functionally, specifically methylates large ribosomal subunit protein uL3 on 'Gln-150'. The chain is Ribosomal protein uL3 glutamine methyltransferase from Shigella dysenteriae serotype 1 (strain Sd197).